Reading from the N-terminus, the 205-residue chain is Thymidylate kinase (205 aa).

Gly10–Ser17 provides a ligand contact to ATP.

This sequence belongs to the thymidylate kinase family.

The catalysed reaction is dTMP + ATP = dTDP + ADP. Functionally, phosphorylation of dTMP to form dTDP in both de novo and salvage pathways of dTTP synthesis. The sequence is that of Thymidylate kinase from Ralstonia nicotianae (strain ATCC BAA-1114 / GMI1000) (Ralstonia solanacearum).